A 266-amino-acid polypeptide reads, in one-letter code: MVDSMDMANSSQNTFRRRTMATSEMREFLSTKDAEPNNFGMQTIPESPTPSTPTRRMSIGDSTRIYDWEEPRFNIQGFVVDYFTYRIAQNGLDWYDAPALPDGVQKEHEMMRSLGTIFEKRHMEMFENFSEQLLAVPKISFSLYQEVVQTVGNSSNTPCPMSYGRLIGLISFGGMVAAKMMESAELQGQVRNLLMYTSLFIKTRIRQSWKEHNRSWADFMKLGQQMKEDYEKEKDAEEGKRLKSWSIIGASVIAVIVCGRIIFSFK.

The segment at 1–58 is disordered; sequence MVDSMDMANSSQNTFRRRTMATSEMREFLSTKDAEPNNFGMQTIPESPTPSTPTRRMS. The segment covering 24 to 35 has biased composition (basic and acidic residues); that stretch reads EMREFLSTKDAE. Positions 75 to 94 match the BH4 motif; the sequence is IQGFVVDYFTYRIAQNGLDW. The BH1 signature appears at 156–174; that stretch reads NTPCPMSYGRLIGLISFGG. The BH2 signature appears at 208–223; sequence SWKEHNRSWADFMKLG.

It belongs to the Bcl-2 family. As to quaternary structure, interacts with asymmetric homodimer ced-4; the interaction sequesters ced-4. Interacts with egl-1; the interaction results in ced-4 release. Interacts with dre-1; the interaction inhibits ced-9 activity, either directly or indirectly. Interacts with dct-1. May form a complex composed of ced-9, ced-4 and mac-1.

Its subcellular location is the perikaryon. It localises to the synapse. The protein localises to the endomembrane system. It is found in the mitochondrion membrane. Plays a major role in programmed cell death (PCD, apoptosis). egl-1 binds to and directly inhibits the activity of ced-9, releasing the cell death activator ced-4 from a ced-9/ced-4 containing protein complex and allowing ced-4 to activate the cell-killing caspase ced-3. During larval development, required for the elimination of transient presynaptic components downstream of egl-1 and upstream of ced-4 and ced-3 apoptotic pathway. This Caenorhabditis briggsae protein is Apoptosis regulator ced-9 (ced-9).